Here is a 99-residue protein sequence, read N- to C-terminus: Putative septation protein SpoVG (99 aa).

The protein belongs to the SpoVG family.

In terms of biological role, could be involved in septation. This chain is Putative septation protein SpoVG, found in Exiguobacterium sp. (strain ATCC BAA-1283 / AT1b).